We begin with the raw amino-acid sequence, 422 residues long: Histidine--tRNA ligase (422 aa).

The protein belongs to the class-II aminoacyl-tRNA synthetase family. As to quaternary structure, homodimer.

The protein localises to the cytoplasm. It carries out the reaction tRNA(His) + L-histidine + ATP = L-histidyl-tRNA(His) + AMP + diphosphate + H(+). The protein is Histidine--tRNA ligase of Vibrio campbellii (strain ATCC BAA-1116).